The following is a 453-amino-acid chain: tRNA-2-methylthio-N(6)-dimethylallyladenosine synthase (453 aa).

Residues 21–137 (RGVYISTYGC…LPQLVAKSFA (117 aa)) form the MTTase N-terminal domain. The [4Fe-4S] cluster site is built by Cys30, Cys66, Cys100, Cys174, Cys178, and Cys181. Positions 160–389 (RNPGVATYVN…FDVHEAMAFE (230 aa)) constitute a Radical SAM core domain. Positions 392 to 453 (KRYEGTTMKV…FPAVFRGEMI (62 aa)) constitute a TRAM domain.

The protein belongs to the methylthiotransferase family. MiaB subfamily. As to quaternary structure, monomer. [4Fe-4S] cluster serves as cofactor.

The protein resides in the cytoplasm. The catalysed reaction is N(6)-dimethylallyladenosine(37) in tRNA + (sulfur carrier)-SH + AH2 + 2 S-adenosyl-L-methionine = 2-methylsulfanyl-N(6)-dimethylallyladenosine(37) in tRNA + (sulfur carrier)-H + 5'-deoxyadenosine + L-methionine + A + S-adenosyl-L-homocysteine + 2 H(+). Catalyzes the methylthiolation of N6-(dimethylallyl)adenosine (i(6)A), leading to the formation of 2-methylthio-N6-(dimethylallyl)adenosine (ms(2)i(6)A) at position 37 in tRNAs that read codons beginning with uridine. The chain is tRNA-2-methylthio-N(6)-dimethylallyladenosine synthase from Bdellovibrio bacteriovorus (strain ATCC 15356 / DSM 50701 / NCIMB 9529 / HD100).